The sequence spans 767 residues: Golgin subfamily A member 1 (767 aa).

Positions 13-58 are disordered; sequence TAVAQRPGGATRIPRSVSKESVASMGADSGDDFASDGSSSREDLSS. Residues serine 30, serine 36, serine 41, serine 47, serine 50, and serine 51 each carry the phosphoserine modification. The stretch at 50–657 forms a coiled coil; sequence SSSREDLSSQ…RKTLQKELKI (608 aa). One can recognise a GRIP domain in the interval 688-737; the sequence is TDAREINFEYLKHVVLKFMSCRESEAFHLIKAVSVLLNFSQEEENMLKET. Residues 748 to 767 are disordered; the sequence is KPAPKGSIRPSISNPRIPWS.

As to quaternary structure, interacts with RAB6A. Directly interacts with TBC1D23. Interacts with FAM91A1; this interaction may be mediated by TBC1D23. Interacts with ARL1; this interaction recruits Golgin-97/GOLGA1 onto the Golgi apparatus. MARylated by PARP12; MARylation is required for basolateral export of E-Cadherin.

Its subcellular location is the golgi apparatus membrane. The protein localises to the golgi apparatus. The protein resides in the trans-Golgi network membrane. It is found in the cytoplasmic vesicle. It localises to the secretory vesicle. Its subcellular location is the acrosome. Involved in vesicular trafficking at the Golgi apparatus level. Involved in endosome-to-Golgi trafficking. Mechanistically, captures transport vesicles arriving from endosomes via the protein TBC1D23. Recognized vesicles are then tethered to the trans-Golgi before subsequent SNARE engagement and vesicle fusion. Selectively regulates E-cadherin transport from the trans-Golgi network in tubulovesicular carriers. Its function is as follows. (Microbial infection) Plays an important role in poxvirus morphogenesis. Translocates into the viral factories where it may transport the membrane fragments and associated protein factors important for virus maturation to the sites of virion assembly. This is Golgin subfamily A member 1 (GOLGA1) from Homo sapiens (Human).